Reading from the N-terminus, the 380-residue chain is MVSSVLRDARRIVVKVGSSLVTNEGRGLDEVAIGEWCRQLAALVRGQGGEPREVIMVSSGAIAEGMKRLGWSSRPGEIHELQAAAAVGQMGLAQMYETKLREQSMGSAQVLLTHADLADRERYLNARSTLLTLLRLGVVPVINENDTVVTDEIKFGDNDTLGALVANLVEADALVILTDQKGLYTADPRRDPQAQFVHEAQAGDAALEAMAGGAGSSIGKGGMITKILAAKRAAGSGASTVIAWGREPDVLLRLARGESIGTLLVAQTQKNQARKQWMVDHLQLRGSVTVDAGAAAKLREDGKSLLPIGMVAVEGDFVRGDVIAVRDAGGTEIARGLANYASAEARLLCRKPSAEFERLLGYAAEPEMVHRDNMVVLGAR.

Lysine 15 contacts ATP. Serine 59, aspartate 146, and asparagine 158 together coordinate substrate. 178 to 179 serves as a coordination point for ATP; sequence TD. Residues 285–363 form the PUA domain; it reads RGSVTVDAGA…AEFERLLGYA (79 aa).

Belongs to the glutamate 5-kinase family.

It is found in the cytoplasm. It catalyses the reaction L-glutamate + ATP = L-glutamyl 5-phosphate + ADP. It participates in amino-acid biosynthesis; L-proline biosynthesis; L-glutamate 5-semialdehyde from L-glutamate: step 1/2. In terms of biological role, catalyzes the transfer of a phosphate group to glutamate to form L-glutamate 5-phosphate. The chain is Glutamate 5-kinase from Acidovorax ebreus (strain TPSY) (Diaphorobacter sp. (strain TPSY)).